We begin with the raw amino-acid sequence, 460 residues long: Argininosuccinate lyase (460 aa).

Belongs to the lyase 1 family. Argininosuccinate lyase subfamily.

Its subcellular location is the cytoplasm. The enzyme catalyses 2-(N(omega)-L-arginino)succinate = fumarate + L-arginine. It functions in the pathway amino-acid biosynthesis; L-arginine biosynthesis; L-arginine from L-ornithine and carbamoyl phosphate: step 3/3. The sequence is that of Argininosuccinate lyase from Campylobacter jejuni subsp. doylei (strain ATCC BAA-1458 / RM4099 / 269.97).